The primary structure comprises 1261 residues: MEERARSRLLRSKATLEQDIKASYLMDHMISDGVLTNDEEAKVLSKATRKEQAVALLETLLRKDNRAYISFYNALIRESYGDLASLLHSDLPLLSPEGEKSFADGVSPSVQAILSVGGVPQRPVVFVSRPPLLNLIREMLYQLRDTPGWVTVFGMAGSGKSVMAAEVVRDRSLIKECFPDGVHWLSVGQCERADLLVRMQSLCFRLEQCQSSDTSQRPPSTVEEAKERLRFLMLRRFPRSLLILDDVWDSSSLRSFDIQCRVLLTTRNRALTDSVSGVRYEVPVENGLDEEKALEILALYVNGKMHKLPEQARSIVSECKGSPLVVSLIGALLREFPDRWSYYLRQLQQKQFKRIRKSSSYDYEALDQAMDASLQVLEAEHQELYRDLSVMQKDIKVPAKVLSVLWGLELEEVEDVLQEFVNKSLLFRDCNQRPYRYYLHDLQLDFLAEQNRDQIAELHKKMVRQYQRFYSKRPPDSADKDSLYWYQFIPYHMAKAGLSKELYSLMFSLDWVKEKARIMGSAHLINDYVEYGEILDKENSEVRVQFQEFLSLNGHHLEQRPFPDVVQLALSQPDRSEVYRQALMQAQKRASRGQIYLNWVNKNIEEGLSRLVMHPHQGAVYYACFSKDGSKIASCGASKALRVFKSTSGEKLLELQAHEEDVLCCAFSPDDRHIATCASDRKVKLWNVERGVLIREFEVEHEEQINHCQFTNTGRRVLLATCSNDKFTNTRLWNPNKKTSQNTMFGHMEPVNHCCFSPNDLYLATSSSDGSLKLFEVSSANEWKSIDVDSFFPESDEEIKAMVKCSTWSADGSQIICAARNTVFVFDVETSDLLLKLKTSRLSTIQFCHACPNSSLLAVALSHYTVELWNFESSKKKAECSGHLSWVHCVQFSPDGSLLLSSSDDQTIRLWETDRVHTSSAVALKRDTDVLSSHSDATIIAPDSSNRLQVLSGSTGAVVLESEELSSRIRCSCISRNAAFVALGSEDGTVQVIEVPSSKASVKLSGHTKTVHHCQFTDDCEILITSSEDSTIRVWKWRTGECMVLQGHMEPVRKFHLLSSSSSPHLFSWSFDGTVKVWDLTRGQMLQDLVCHEGAVLSCDVSSDGRLFATTSANRTAKVWSSASWKMLFLLEGHKDCVRSCRFSWDNKRLATGDDNGEIRLWSMLDGALLKICPRDTKDSMNSYHAGWVTDLHFSPDNRVLVSTAGYIKWWSVESGEALQTFYTMGGNLKKIHVSPDFSTFITVDSIGILYILKRLEGEGT.

Positions 1 to 90 (MEERARSRLL…GDLASLLHSD (90 aa)) constitute a CARD domain. The 312-residue stretch at 106 to 417 (VSPSVQAILS…LELEEVEDVL (312 aa)) folds into the NB-ARC domain. 154 to 161 (GMAGSGKS) is an ATP binding site. 13 WD repeats span residues 615–654 (PHQGAVYYACFSKDGSKIASCGASKALRVFKSTSGEKLLE), 657–696 (AHEEDVLCCAFSPDDRHIATCASDRKVKLWNVERGVLIRE), 700–743 (EHEE…SQNT), 746–785 (GHMEPVNHCCFSPNDLYLATSSSDGSLKLFEVSSANEWKS), 798–836 (EIKAMVKCSTWSADGSQIICAARNTVFVFDVETSDLLLK), 840–879 (SRLSTIQFCHACPNSSLLAVALSHYTVELWNFESSKKKAE), 882–921 (GHLSWVHCVQFSPDGSLLLSSSDDQTIRLWETDRVHTSSA), 964–1003 (ELSSRIRCSCISRNAAFVALGSEDGTVQVIEVPSSKASVK), 1006–1045 (GHTKTVHHCQFTDDCEILITSSEDSTIRVWKWRTGECMVL), 1047–1088 (GHME…MLQD), 1091–1130 (CHEGAVLSCDVSSDGRLFATTSANRTAKVWSSASWKMLFL), 1133–1172 (GHKDCVRSCRFSWDNKRLATGDDNGEIRLWSMLDGALLKI), and 1184–1223 (YHAGWVTDLHFSPDNRVLVSTAGYIKWWSVESGEALQTFY).

Monomer. Oligomerizes upon binding of cytochrome c and dATP.

It is found in the cytoplasm. Its function is as follows. Oligomeric Apaf-1 mediates the cytochrome c-dependent autocatalytic activation of pro-caspase-9 (Apaf-3), leading to the activation of caspase-3 and apoptosis. This activation requires ATP. This is Apoptotic protease-activating factor 1 (apaf1) from Danio rerio (Zebrafish).